A 228-amino-acid polypeptide reads, in one-letter code: Phosphoribosylformylglycinamidine synthase subunit PurQ (228 aa).

The 224-residue stretch at 2-225 (KAAVISFPGS…INQTEGADVR (224 aa)) folds into the Glutamine amidotransferase type-1 domain. C86 acts as the Nucleophile in catalysis. Active-site residues include H194 and E196.

Part of the FGAM synthase complex composed of 1 PurL, 1 PurQ and 2 PurS subunits.

The protein localises to the cytoplasm. It catalyses the reaction N(2)-formyl-N(1)-(5-phospho-beta-D-ribosyl)glycinamide + L-glutamine + ATP + H2O = 2-formamido-N(1)-(5-O-phospho-beta-D-ribosyl)acetamidine + L-glutamate + ADP + phosphate + H(+). The enzyme catalyses L-glutamine + H2O = L-glutamate + NH4(+). The protein operates within purine metabolism; IMP biosynthesis via de novo pathway; 5-amino-1-(5-phospho-D-ribosyl)imidazole from N(2)-formyl-N(1)-(5-phospho-D-ribosyl)glycinamide: step 1/2. Its function is as follows. Part of the phosphoribosylformylglycinamidine synthase complex involved in the purines biosynthetic pathway. Catalyzes the ATP-dependent conversion of formylglycinamide ribonucleotide (FGAR) and glutamine to yield formylglycinamidine ribonucleotide (FGAM) and glutamate. The FGAM synthase complex is composed of three subunits. PurQ produces an ammonia molecule by converting glutamine to glutamate. PurL transfers the ammonia molecule to FGAR to form FGAM in an ATP-dependent manner. PurS interacts with PurQ and PurL and is thought to assist in the transfer of the ammonia molecule from PurQ to PurL. The chain is Phosphoribosylformylglycinamidine synthase subunit PurQ from Lacticaseibacillus casei (strain BL23) (Lactobacillus casei).